The following is a 949-amino-acid chain: Sensor histidine kinase RcsC (949 aa).

Topologically, residues 1-19 (MKYLASFRTTLKASRYMFR) are cytoplasmic. A helical membrane pass occupies residues 20-41 (ALALVLWLLIAFSSVFYIVNAL). The Periplasmic portion of the chain corresponds to 42–313 (HQRESEIRQE…PVDKVLERIR (272 aa)). The chain crosses the membrane as a helical span at residues 314–335 (MVILNAILLNVLAGAALFTLAR). Residues 336–949 (MYERRIFIPA…AERVRKSRES (614 aa)) are Cytoplasmic-facing. One can recognise a PAS domain in the interval 357 to 425 (QFNRKIVASA…VLTSNNTNLQ (69 aa)). The region spanning 476–692 (TVSHELRTPL…QFTVRIPLYG (217 aa)) is the Histidine kinase domain. H479 is modified (phosphohistidine; by autocatalysis). The ABL domain maps to 705–805 (SGKRCWLAVR…ARIYLIEMES (101 aa)). The Response regulatory domain occupies 826 to 940 (MILVVDDHPI…VIKQTLTVYA (115 aa)). D875 is modified (4-aspartylphosphate).

This sequence belongs to the RcsC family. In terms of assembly, interacts with RcsD. In terms of processing, autophosphorylated. Activation probably requires a transfer of a phosphate group from a His in the transmitter domain to an Asp in the receiver domain.

Its subcellular location is the cell inner membrane. The enzyme catalyses ATP + protein L-histidine = ADP + protein N-phospho-L-histidine.. Its function is as follows. Component of the Rcs signaling system, which controls transcription of numerous genes. RcsC functions as a membrane-associated protein kinase that phosphorylates RcsD in response to environmental signals. The phosphoryl group is then transferred to the response regulator RcsB. Involved in regulation of K30 capsular polysaccharide synthesis. The sequence is that of Sensor histidine kinase RcsC from Escherichia coli.